The chain runs to 276 residues: Pantothenate synthetase (276 aa).

An ATP-binding site is contributed by 27–34; that stretch reads MGNLHDGH. His34 (proton donor) is an active-site residue. Residue Gln58 coordinates (R)-pantoate. Gln58 lines the beta-alanine pocket. 145-148 contacts ATP; the sequence is GKKD. Gln151 contributes to the (R)-pantoate binding site. Residues Ile174 and 182-185 each bind ATP; that span reads LSSR.

It belongs to the pantothenate synthetase family. As to quaternary structure, homodimer.

The protein resides in the cytoplasm. The enzyme catalyses (R)-pantoate + beta-alanine + ATP = (R)-pantothenate + AMP + diphosphate + H(+). It participates in cofactor biosynthesis; (R)-pantothenate biosynthesis; (R)-pantothenate from (R)-pantoate and beta-alanine: step 1/1. Catalyzes the condensation of pantoate with beta-alanine in an ATP-dependent reaction via a pantoyl-adenylate intermediate. The sequence is that of Pantothenate synthetase from Aromatoleum aromaticum (strain DSM 19018 / LMG 30748 / EbN1) (Azoarcus sp. (strain EbN1)).